The primary structure comprises 154 residues: Transcription antitermination protein NusB (154 aa).

The interval 132–154 (KDKQSPQSTPLDDSDKDESDQTN) is disordered. Over residues 143–154 (DDSDKDESDQTN) the composition is skewed to acidic residues.

Belongs to the NusB family.

Its function is as follows. Involved in transcription antitermination. Required for transcription of ribosomal RNA (rRNA) genes. Binds specifically to the boxA antiterminator sequence of the ribosomal RNA (rrn) operons. The chain is Transcription antitermination protein NusB from Bifidobacterium animalis subsp. lactis (strain AD011).